Here is a 230-residue protein sequence, read N- to C-terminus: Ureidoacrylate amidohydrolase RutB (230 aa).

Asp-24 serves as the catalytic Proton acceptor. Lys-133 is an active-site residue. Cys-166 functions as the Nucleophile in the catalytic mechanism.

Belongs to the isochorismatase family. RutB subfamily.

The enzyme catalyses (Z)-3-ureidoacrylate + H2O + H(+) = (Z)-3-aminoacrylate + NH4(+) + CO2. It carries out the reaction (Z)-3-ureidoacrylate + H2O = (Z)-3-aminoacrylate + carbamate + H(+). It catalyses the reaction (Z)-2-methylureidoacrylate + H2O + H(+) = (Z)-2-methylaminoacrylate + NH4(+) + CO2. In terms of biological role, hydrolyzes ureidoacrylate to form aminoacrylate and carbamate. The carbamate hydrolyzes spontaneously, thereby releasing one of the nitrogen atoms of the pyrimidine ring as ammonia and one of its carbon atoms as CO2. The protein is Ureidoacrylate amidohydrolase RutB of Escherichia coli O7:K1 (strain IAI39 / ExPEC).